The sequence spans 232 residues: 5'-methylthioadenosine/S-adenosylhomocysteine nucleosidase (232 aa).

Glu-12 acts as the Proton acceptor in catalysis. Substrate contacts are provided by residues Gly-78, Ile-152, and 173 to 174; that span reads ME. The active-site Proton donor is Asp-197.

This sequence belongs to the PNP/UDP phosphorylase family. MtnN subfamily. As to quaternary structure, homodimer.

It carries out the reaction S-adenosyl-L-homocysteine + H2O = S-(5-deoxy-D-ribos-5-yl)-L-homocysteine + adenine. The catalysed reaction is S-methyl-5'-thioadenosine + H2O = 5-(methylsulfanyl)-D-ribose + adenine. It catalyses the reaction 5'-deoxyadenosine + H2O = 5-deoxy-D-ribose + adenine. It participates in amino-acid biosynthesis; L-methionine biosynthesis via salvage pathway; S-methyl-5-thio-alpha-D-ribose 1-phosphate from S-methyl-5'-thioadenosine (hydrolase route): step 1/2. Its function is as follows. Catalyzes the irreversible cleavage of the glycosidic bond in both 5'-methylthioadenosine (MTA) and S-adenosylhomocysteine (SAH/AdoHcy) to adenine and the corresponding thioribose, 5'-methylthioribose and S-ribosylhomocysteine, respectively. Also cleaves 5'-deoxyadenosine, a toxic by-product of radical S-adenosylmethionine (SAM) enzymes, into 5-deoxyribose and adenine. Thus, is required for in vivo function of the radical SAM enzymes biotin synthase and lipoic acid synthase, that are inhibited by 5'-deoxyadenosine accumulation. The protein is 5'-methylthioadenosine/S-adenosylhomocysteine nucleosidase of Shigella boydii serotype 4 (strain Sb227).